The following is a 286-amino-acid chain: Phosphate import ATP-binding protein PstB (286 aa).

Residues 40–281 (IAVRNLDFYY…PREQRTQEYI (242 aa)) form the ABC transporter domain. 72–79 (GPSGCGKS) is a binding site for ATP.

Belongs to the ABC transporter superfamily. Phosphate importer (TC 3.A.1.7) family. As to quaternary structure, the complex is composed of two ATP-binding proteins (PstB), two transmembrane proteins (PstC and PstA) and a solute-binding protein (PstS).

The protein resides in the cell inner membrane. It catalyses the reaction phosphate(out) + ATP + H2O = ADP + 2 phosphate(in) + H(+). Part of the ABC transporter complex PstSACB involved in phosphate import. Responsible for energy coupling to the transport system. In Granulibacter bethesdensis (strain ATCC BAA-1260 / CGDNIH1), this protein is Phosphate import ATP-binding protein PstB.